The following is a 103-amino-acid chain: Mitochondrial import inner membrane translocase subunit Tim10 B (103 aa).

The short motif at cysteine 28 to cysteine 52 is the Twin CX3C motif element. 2 cysteine pairs are disulfide-bonded: cysteine 28/cysteine 52 and cysteine 32/cysteine 48.

It belongs to the small Tim family. Component of the TIM22 complex, which core is composed of TIMM22, associated with TIMM10 (TIMM10A and/or TIMM10B), TIMM9, AGK and TIMM29. Ubiquitous, with highest expression in heart, kidney, liver and skeletal muscle.

The protein localises to the mitochondrion inner membrane. Component of the TIM22 complex, a complex that mediates the import and insertion of multi-pass transmembrane proteins into the mitochondrial inner membrane. The TIM22 complex forms a twin-pore translocase that uses the membrane potential as the external driving force. In the TIM22 complex, it may act as a docking point for the soluble 70 kDa complex that guides the target proteins in transit through the aqueous mitochondrial intermembrane space. The polypeptide is Mitochondrial import inner membrane translocase subunit Tim10 B (TIMM10B) (Homo sapiens (Human)).